Consider the following 225-residue polypeptide: Testis-expressed protein 30 (225 aa).

This Mus musculus (Mouse) protein is Testis-expressed protein 30 (Tex30).